The chain runs to 379 residues: Alkanesulfonate monooxygenase (379 aa).

This sequence belongs to the SsuD family.

The enzyme catalyses an alkanesulfonate + FMNH2 + O2 = an aldehyde + FMN + sulfite + H2O + 2 H(+). Functionally, catalyzes the desulfonation of aliphatic sulfonates. This chain is Alkanesulfonate monooxygenase, found in Pseudomonas syringae pv. syringae (strain B728a).